We begin with the raw amino-acid sequence, 128 residues long: Small nuclear ribonucleoprotein associated homolog 13 (128 aa).

It belongs to the eukaryotic ribosomal protein eL8 family.

The protein resides in the nucleus. It localises to the nucleolus. Binds to the 5'-stem-loop of U4 snRNA and may play a role in the late stage of spliceosome assembly. The protein undergoes a conformational change upon RNA-binding. The chain is Small nuclear ribonucleoprotein associated homolog 13 from Caenorhabditis elegans.